Reading from the N-terminus, the 369-residue chain is Protein V (369 aa).

Disordered stretches follow at residues 1 to 23 and 54 to 320; these read MDQDALISKEDSEVEREASGGRE and INTL…GHRR. Basic and acidic residues-rich tracts occupy residues 7–20, 99–110, 150–168, and 175–193; these read ISKEDSEVEREASG, AEAHARNVDKQN, GAEDENREMAANPDKRGED, and EEIRRSAPLPDEREGRADN. Phosphoserine; by host occurs at positions 249, 257, and 260. Residues His318, Cys337, Cys341, Cys353, Cys355, Cys358, Cys362, and Cys365 each contribute to the Zn(2+) site.

The protein belongs to the paramyxoviruses V protein family. Interacts with host IFIH1/MDA5 and DHX58/LGP2. Interacts with host IRF3. Interacts with host RIGI regulatory protein (via CARDs domain) and host TRIM25 (via SPRY domain); these interactions prevent TRIM25-mediated ubiquitination of RIG-I and disrupts downstream RIG-I signaling.

It localises to the host cytoplasm. Its function is as follows. Plays an essential role in the inhibition of host immune response. Prevents the establishment of cellular antiviral state by blocking interferon-alpha/beta (IFN-alpha/beta) production and signaling pathway. Interacts with host IFIH1/MDA5 and DHX58/LGP2 to inhibit the transduction pathway involved in the activation of IFN-beta promoter, thus protecting the virus against cell antiviral state. Also interacts with and inhibits host IRF3. Blocks the type I interferon signaling pathway by disrupting the RIG-I signaling pathway. In Cavia cutleri (Guinea pig), this protein is Protein V (P/V/C).